An 893-amino-acid polypeptide reads, in one-letter code: Alanine--tRNA ligase (893 aa).

The protein belongs to the class-II aminoacyl-tRNA synthetase family.

The protein resides in the cytoplasm. It carries out the reaction tRNA(Ala) + L-alanine + ATP = L-alanyl-tRNA(Ala) + AMP + diphosphate. Functionally, catalyzes the attachment of alanine to tRNA(Ala) in a two-step reaction: alanine is first activated by ATP to form Ala-AMP and then transferred to the acceptor end of tRNA(Ala). Also edits incorrectly charged Ser-tRNA(Ala) and Gly-tRNA(Ala) via its editing domain. In Leuconostoc mesenteroides subsp. mesenteroides (strain ATCC 8293 / DSM 20343 / BCRC 11652 / CCM 1803 / JCM 6124 / NCDO 523 / NBRC 100496 / NCIMB 8023 / NCTC 12954 / NRRL B-1118 / 37Y), this protein is Alanine--tRNA ligase (alaS).